The following is a 176-amino-acid chain: Large ribosomal subunit protein uL16 (176 aa).

This sequence belongs to the universal ribosomal protein uL16 family.

The chain is Large ribosomal subunit protein uL16 from Sulfolobus acidocaldarius (strain ATCC 33909 / DSM 639 / JCM 8929 / NBRC 15157 / NCIMB 11770).